The chain runs to 100 residues: Urease subunit gamma (100 aa).

Belongs to the urease gamma subunit family. As to quaternary structure, heterotrimer of UreA (gamma), UreB (beta) and UreC (alpha) subunits. Three heterotrimers associate to form the active enzyme.

It localises to the cytoplasm. It catalyses the reaction urea + 2 H2O + H(+) = hydrogencarbonate + 2 NH4(+). It functions in the pathway nitrogen metabolism; urea degradation; CO(2) and NH(3) from urea (urease route): step 1/1. This Cyanothece sp. (strain PCC 7425 / ATCC 29141) protein is Urease subunit gamma.